The sequence spans 118 residues: Thioredoxin H-type 2 (118 aa).

A Thioredoxin domain is found at 2–113 (AEEGQVIGVH…LQQTIAKHIS (112 aa)). Residues Cys-39 and Cys-42 each act as nucleophile in the active site. A disulfide bridge links Cys-39 with Cys-42.

It belongs to the thioredoxin family. Plant H-type subfamily.

Its subcellular location is the cytoplasm. Functionally, participates in various redox reactions through the reversible oxidation of the active center dithiol to a disulfide. The H form is known to activate a number of cytosolic enzymes. This is Thioredoxin H-type 2 from Nicotiana tabacum (Common tobacco).